An 81-amino-acid chain; its full sequence is Cytotoxin 1d/1e (81 aa).

Residues 1–21 (MKTLLLTLVVVTIVCLDLGYT) form the signal peptide. 4 cysteine pairs are disulfide-bonded: C24/C42, C35/C59, C63/C74, and C75/C80.

The protein belongs to the three-finger toxin family. Short-chain subfamily. Type IA cytotoxin sub-subfamily. Monomer in solution; Homodimer and oligomer in the presence of negatively charged lipids forming a pore with a size ranging between 20 and 30 Angstroms. In terms of tissue distribution, expressed by the venom gland.

It localises to the secreted. It is found in the target cell membrane. Shows cytolytic activity on many different cells by forming pore in lipid membranes. In vivo, increases heart rate or kills the animal by cardiac arrest. In addition, it binds to heparin with high affinity, interacts with Kv channel-interacting protein 1 (KCNIP1) in a calcium-independent manner, and binds to integrin alpha-V/beta-3 (ITGAV/ITGB3) with moderate affinity. The chain is Cytotoxin 1d/1e from Naja atra (Chinese cobra).